A 138-amino-acid chain; its full sequence is ATP synthase epsilon chain (138 aa).

This sequence belongs to the ATPase epsilon chain family. F-type ATPases have 2 components, CF(1) - the catalytic core - and CF(0) - the membrane proton channel. CF(1) has five subunits: alpha(3), beta(3), gamma(1), delta(1), epsilon(1). CF(0) has three main subunits: a, b and c.

Its subcellular location is the cell inner membrane. Its function is as follows. Produces ATP from ADP in the presence of a proton gradient across the membrane. The sequence is that of ATP synthase epsilon chain from Polaromonas sp. (strain JS666 / ATCC BAA-500).